The primary structure comprises 314 residues: Olfactory receptor 1Q1 (314 aa).

Residues 1-25 (MDNSNWTSVSHFVLLGISTHPEEQI) are Extracellular-facing. A glycan (N-linked (GlcNAc...) asparagine) is linked at Asn5. A helical transmembrane segment spans residues 26–49 (PLFLVFSLMYAINISGNLAIITLI). Residues 50 to 57 (LSAPRLHI) are Cytoplasmic-facing. Residues 58-79 (PMYIFLSNLALTDICFTSTTVP) traverse the membrane as a helical segment. At 80 to 100 (KMLQIIFSPTKVISYTGCLAQ) the chain is on the extracellular side. Cys97 and Cys189 are joined by a disulfide. The helical transmembrane segment at 101-120 (TYFFICFAVMENFILAVMAY) threads the bilayer. Over 121 to 139 (DRYIAICHPFHYTMILTRM) the chain is Cytoplasmic. Residues 140 to 158 (LCVKMVVMCHALSHLHAML) traverse the membrane as a helical segment. The Extracellular segment spans residues 159–195 (HTFLIGQLIFCADNRIPHFFCDLYALMKISCTSTYLN). Residues 196-219 (TLMIHTEGAVVISGALAFITASYA) traverse the membrane as a helical segment. The Cytoplasmic segment spans residues 220 to 236 (CIILVVLRIPSAKGRWK). A helical transmembrane segment spans residues 237–259 (TFSTCGSHLTVVAIFYGTLSWVY). Residues 260-272 (FRPLSSYSVTKGR) lie on the Extracellular side of the membrane. Residues 273 to 292 (IITVVYTVVTPMLNPFIYSL) traverse the membrane as a helical segment. At 293 to 314 (RNGDVKGGFMKWMSRMQTFFFR) the chain is on the cytoplasmic side.

This sequence belongs to the G-protein coupled receptor 1 family.

It is found in the cell membrane. Odorant receptor. The sequence is that of Olfactory receptor 1Q1 (OR1Q1) from Homo sapiens (Human).